Reading from the N-terminus, the 23-residue chain is Unknown protein NF016 from 2D-PAGE (23 aa).

The polypeptide is Unknown protein NF016 from 2D-PAGE (Naegleria fowleri (Brain eating amoeba)).